The chain runs to 145 residues: U1 small nuclear ribonucleoprotein C (145 aa).

A Matrin-type zinc finger spans residues 4–36; that stretch reads YYCDYCDTYLTHDSPSVRKTHCTGRKHRDNVKF. A disordered region spans residues 67-91; that stretch reads FAGGPGGAPPKPAGVSIPPPNMGAP. Over residues 73–91 the composition is skewed to pro residues; sequence GAPPKPAGVSIPPPNMGAP.

Belongs to the U1 small nuclear ribonucleoprotein C family. U1 snRNP is composed of the 7 core Sm proteins B/B', D1, D2, D3, E, F and G that assemble in a heptameric protein ring on the Sm site of the small nuclear RNA to form the core snRNP, and at least 3 U1 snRNP-specific proteins U1-70K, U1-A and U1-C. U1-C interacts with U1 snRNA and the 5' splice-site region of the pre-mRNA.

It localises to the nucleus. Component of the spliceosomal U1 snRNP, which is essential for recognition of the pre-mRNA 5' splice-site and the subsequent assembly of the spliceosome. U1-C is directly involved in initial 5' splice-site recognition for both constitutive and regulated alternative splicing. The interaction with the 5' splice-site seems to precede base-pairing between the pre-mRNA and the U1 snRNA. Stimulates commitment or early (E) complex formation by stabilizing the base pairing of the 5' end of the U1 snRNA and the 5' splice-site region. Regulates alternative splicing of a distinct group of target genes. The protein is U1 small nuclear ribonucleoprotein C of Drosophila melanogaster (Fruit fly).